A 199-amino-acid chain; its full sequence is MYEGVVQDLIDELGRLPGVGPKGAQRIAFHLLQADPADVRRLADVLLEVKAKVKFCSICFNVSQDDQCRICRDPRRDPSVLCVVEEYKDVVAIERTREFRGRYHVLGGAISPIDGVGPEQLRIRELMVRLADGTITEVILATDPNLEGEATATYLTRMLKPLELRVTRLASGLPVGGDLEYADEVTLGRAFAGRRSADD.

A C4-type zinc finger spans residues 56-71 (CSICFNVSQDDQCRIC). Residues 79-174 (SVLCVVEEYK…RVTRLASGLP (96 aa)) form the Toprim domain.

It belongs to the RecR family.

May play a role in DNA repair. It seems to be involved in an RecBC-independent recombinational process of DNA repair. It may act with RecF and RecO. The polypeptide is Recombination protein RecR (Nocardioides sp. (strain ATCC BAA-499 / JS614)).